The chain runs to 234 residues: DNA repair protein RecO (234 aa).

Belongs to the RecO family.

Involved in DNA repair and RecF pathway recombination. This is DNA repair protein RecO from Halorhodospira halophila (strain DSM 244 / SL1) (Ectothiorhodospira halophila (strain DSM 244 / SL1)).